Here is a 439-residue protein sequence, read N- to C-terminus: GTPase Der (439 aa).

EngA-type G domains are found at residues 2–168 and 181–357; these read ATVL…EEKG and IKVA…ASYT. GTP is bound by residues 8-15, 55-59, 118-121, 187-194, 234-238, and 300-303; these read GKPNVGKS, DTCGV, NKTE, GRPNVGKS, DTAGL, and NKWD. Residues 358–439 form the KH-like domain; sequence TKVPSSAINS…PIFLKFKRSR (82 aa).

Belongs to the TRAFAC class TrmE-Era-EngA-EngB-Septin-like GTPase superfamily. EngA (Der) GTPase family. In terms of assembly, associates with the 50S ribosomal subunit.

Functionally, GTPase that plays an essential role in the late steps of ribosome biogenesis. The sequence is that of GTPase Der from Thermotoga petrophila (strain ATCC BAA-488 / DSM 13995 / JCM 10881 / RKU-1).